A 396-amino-acid polypeptide reads, in one-letter code: 1-deoxy-D-xylulose 5-phosphate reductoisomerase (396 aa).

Positions 10, 11, 12, 13, 36, 37, 38, and 124 each coordinate NADPH. Residue K125 participates in 1-deoxy-D-xylulose 5-phosphate binding. E126 contacts NADPH. Residue D150 participates in Mn(2+) binding. Positions 151, 152, 186, and 209 each coordinate 1-deoxy-D-xylulose 5-phosphate. E152 provides a ligand contact to Mn(2+). NADPH is bound at residue G215. Residues S222, N227, K228, and E231 each contribute to the 1-deoxy-D-xylulose 5-phosphate site. Residue E231 coordinates Mn(2+).

The protein belongs to the DXR family. The cofactor is Mg(2+). Requires Mn(2+) as cofactor.

It carries out the reaction 2-C-methyl-D-erythritol 4-phosphate + NADP(+) = 1-deoxy-D-xylulose 5-phosphate + NADPH + H(+). It participates in isoprenoid biosynthesis; isopentenyl diphosphate biosynthesis via DXP pathway; isopentenyl diphosphate from 1-deoxy-D-xylulose 5-phosphate: step 1/6. In terms of biological role, catalyzes the NADPH-dependent rearrangement and reduction of 1-deoxy-D-xylulose-5-phosphate (DXP) to 2-C-methyl-D-erythritol 4-phosphate (MEP). The polypeptide is 1-deoxy-D-xylulose 5-phosphate reductoisomerase (Actinobacillus pleuropneumoniae serotype 3 (strain JL03)).